The following is a 212-amino-acid chain: ATP phosphoribosyltransferase (212 aa).

It belongs to the ATP phosphoribosyltransferase family. Short subfamily. Heteromultimer composed of HisG and HisZ subunits.

The protein resides in the cytoplasm. The enzyme catalyses 1-(5-phospho-beta-D-ribosyl)-ATP + diphosphate = 5-phospho-alpha-D-ribose 1-diphosphate + ATP. Its pathway is amino-acid biosynthesis; L-histidine biosynthesis; L-histidine from 5-phospho-alpha-D-ribose 1-diphosphate: step 1/9. Functionally, catalyzes the condensation of ATP and 5-phosphoribose 1-diphosphate to form N'-(5'-phosphoribosyl)-ATP (PR-ATP). Has a crucial role in the pathway because the rate of histidine biosynthesis seems to be controlled primarily by regulation of HisG enzymatic activity. The chain is ATP phosphoribosyltransferase from Clostridium botulinum (strain Langeland / NCTC 10281 / Type F).